Here is a 322-residue protein sequence, read N- to C-terminus: Formimidoylglutamase (322 aa).

Residues His130, Asp156, His158, Asp160, Cys244, and Asp246 each coordinate Mn(2+).

The protein belongs to the arginase family. Requires Mn(2+) as cofactor.

It catalyses the reaction N-formimidoyl-L-glutamate + H2O = formamide + L-glutamate. Its pathway is amino-acid degradation; L-histidine degradation into L-glutamate; L-glutamate from N-formimidoyl-L-glutamate (hydrolase route): step 1/1. Its function is as follows. Catalyzes the conversion of N-formimidoyl-L-glutamate to L-glutamate and formamide. The sequence is that of Formimidoylglutamase from Geobacillus thermodenitrificans (strain NG80-2).